The primary structure comprises 634 residues: Kelch-like protein 22 (634 aa).

Residue alanine 2 is modified to N-acetylalanine. In terms of domain architecture, BTB spans 50–117 (FDVVLVVEGR…IYTSELELSL (68 aa)). Kelch repeat units follow at residues 299 to 349 (CVVG…VLNN), 350 to 399 (FVYL…VVGR), 400 to 446 (YIYA…TLEG), 448 to 493 (MYIT…TLLN), 494 to 544 (KLYV…VLDN), and 545 to 593 (RIYV…VLTL). Residue threonine 463 is modified to Phosphothreonine. Phosphotyrosine is present on tyrosine 466. Residue threonine 475 is modified to Phosphothreonine. Residues 600-634 (EPPRGTPDRSQADPDFASEVMSVSDWEEFDNSSED) form a disordered region. At threonine 605 the chain carries Phosphothreonine. Over residues 624-634 (DWEEFDNSSED) the composition is skewed to acidic residues.

Component of the BCR(KLHL22) E3 ubiquitin ligase complex, at least composed of CUL3, KLHL22 and RBX1. Interacts with PLK1. Interacts with DEPDC5 (via DEP domain); the interaction depends on amino acid availability. Interacts with YWHAE; required for the nuclear localization of KLHL22 upon amino acid starvation.

It is found in the cytoplasm. The protein localises to the cytosol. It localises to the cytoskeleton. Its subcellular location is the microtubule organizing center. The protein resides in the centrosome. It is found in the spindle. The protein localises to the nucleus. It localises to the lysosome. The protein operates within protein modification; protein ubiquitination. Its function is as follows. Substrate-specific adapter of a BCR (BTB-CUL3-RBX1) E3 ubiquitin ligase complex required for chromosome alignment and localization of PLK1 at kinetochores. The BCR(KLHL22) ubiquitin ligase complex mediates monoubiquitination of PLK1, leading to PLK1 dissociation from phosphoreceptor proteins and subsequent removal from kinetochores, allowing silencing of the spindle assembly checkpoint (SAC) and chromosome segregation. Monoubiquitination of PLK1 does not lead to PLK1 degradation. The BCR(KLHL22) ubiquitin ligase complex is also responsible for the amino acid-stimulated 'Lys-48' polyubiquitination and proteasomal degradation of DEPDC5. Through the degradation of DEPDC5, releases the GATOR1 complex-mediated inhibition of the TORC1 pathway. It is therefore an amino acid-dependent activator within the amino acid-sensing branch of the TORC1 pathway, indirectly regulating different cellular processes including cell growth and autophagy. The protein is Kelch-like protein 22 of Homo sapiens (Human).